The chain runs to 538 residues: UNC93-like protein (538 aa).

N-linked (GlcNAc...) asparagine glycosylation is present at N45. 5 helical membrane-spanning segments follow: residues 46 to 66 (ISII…TANL), 80 to 100 (SLSA…TLII), 105 to 125 (VKWT…FQLF), 128 to 148 (FYTL…MWAS), and 170 to 190 (AIIV…ELWG). N-linked (GlcNAc...) asparagine glycosylation is present at N210. The next 7 helical transmembrane spans lie at 244–264 (IFEI…IIAF), 305–325 (LLIP…ADFT), 338–358 (IGFV…LFGS), 366–386 (TPII…ELFW), 394–414 (IIFY…QTQI), 435–455 (LWES…CTQM), and 457–477 (LYIL…VEIL).

Belongs to the unc-93 family.

The protein resides in the membrane. The chain is UNC93-like protein from Drosophila melanogaster (Fruit fly).